The following is a 363-amino-acid chain: Guanine nucleotide-binding protein alpha-11 subunit (363 aa).

Positions 26–363 (KMLKILLLGG…KISMEKVGFM (338 aa)) constitute a G-alpha domain. Positions 29–42 (KILLLGGPECGKST) are G1 motif. Residues 34-41 (GGPECGKS), 172-178 (LRARVPT), 197-201 (DVGGQ), 276-279 (NKID), and alanine 335 each bind GTP. The Mg(2+) site is built by serine 41 and threonine 178. The interval 170-178 (DVLRARVPT) is G2 motif. A G3 motif region spans residues 193–202 (LRMVDVGGQR). The tract at residues 272–279 (ILFLNKID) is G4 motif. The interval 333–338 (TNATDT) is G5 motif.

The protein belongs to the G-alpha family. As to quaternary structure, g proteins are composed of 3 units; alpha, beta and gamma. The alpha chain contains the guanine nucleotide binding site. Expressed in ADL and ASH neurons.

Functionally, guanine nucleotide-binding proteins (G proteins) are involved as modulators or transducers in various transmembrane signaling systems. Mediates the transduction of food and serotonin signals, which modulates the avoidance response to the odorant octanol. Has a role in lifespan to promote longevity. This is Guanine nucleotide-binding protein alpha-11 subunit (gpa-11) from Caenorhabditis elegans.